The following is a 257-amino-acid chain: Discoidin-2 (257 aa).

Residues 1–155 (MSVPAGSVSC…SLRWELYALP (155 aa)) form a beta-sandwich region. Residues 10–154 (CLANALLNLR…ISLRWELYAL (145 aa)) form the F5/8 type C domain. Asn-39, Ser-40, and Asp-47 together coordinate Ca(2+). Positions 81–83 (RGD) match the Cell attachment site motif. Position 84 is a phosphohistidine (His-84). Positions 156 to 162 (VKSYSNP) are linker. The tract at residues 163–257 (SVQVGEVSIG…FDYVAVEFNN (95 aa)) is lectin-like. The a carbohydrate site is built by Asp-209, Arg-218, and Trp-238.

As to quaternary structure, homotrimer. Post-translationally, the N-terminus is blocked. In terms of tissue distribution, maturing spore cells.

Galactose-binding lectin. May be necessary for the primary process of spore formation and may be involved in spore coat formation. This chain is Discoidin-2 (dscE), found in Dictyostelium discoideum (Social amoeba).